The chain runs to 251 residues: Alanyl-tRNA editing protein AlaX-M (251 aa).

The Zn(2+) site is built by H107, H111, C210, and H214.

The protein belongs to the class-II aminoacyl-tRNA synthetase family. Editing domain AlaX-M subfamily. The cofactor is Zn(2+).

The protein localises to the cytoplasm. Its function is as follows. Functions in trans to edit the amino acid moiety from mischarged Ser-tRNA(Ala). Recognition depends, at least in part, on the acceptor stem of tRNA(Ala). The sequence is that of Alanyl-tRNA editing protein AlaX-M (alaXM) from Methanosarcina mazei (strain ATCC BAA-159 / DSM 3647 / Goe1 / Go1 / JCM 11833 / OCM 88) (Methanosarcina frisia).